The primary structure comprises 122 residues: Cytochrome b-c1 complex subunit 7-1, mitochondrial (122 aa).

Belongs to the UQCRB/QCR7 family. As to quaternary structure, component of the ubiquinol-cytochrome c oxidoreductase (cytochrome b-c1 complex, complex III, CIII), a multisubunit enzyme composed of 10 subunits. The complex is composed of 3 respiratory subunits cytochrome b (MT-CYB), cytochrome c1 (CYC1-1 or CYC1-2) and Rieske protein (UCR1-1 or UCR1-2), 2 core protein subunits MPPalpha1 (or MPPalpha2) and MPPB, and 5 low-molecular weight protein subunits QCR7-1 (or QCR7-2), UCRQ-1 (or UCRQ-2), QCR9, UCRY and probably QCR6-1 (or QCR6-2). The complex exists as an obligatory dimer and forms supercomplexes (SCs) in the inner mitochondrial membrane with NADH-ubiquinone oxidoreductase (complex I, CI), resulting in different assemblies (supercomplexes SCI(1)III(2) and SCI(2)III(4)).

Its subcellular location is the mitochondrion inner membrane. Functionally, component of the ubiquinol-cytochrome c oxidoreductase, a multisubunit transmembrane complex that is part of the mitochondrial electron transport chain which drives oxidative phosphorylation. The respiratory chain contains 3 multisubunit complexes succinate dehydrogenase (complex II, CII), ubiquinol-cytochrome c oxidoreductase (cytochrome b-c1 complex, complex III, CIII) and cytochrome c oxidase (complex IV, CIV), that cooperate to transfer electrons derived from NADH and succinate to molecular oxygen, creating an electrochemical gradient over the inner membrane that drives transmembrane transport and the ATP synthase. The cytochrome b-c1 complex catalyzes electron transfer from ubiquinol to cytochrome c, linking this redox reaction to translocation of protons across the mitochondrial inner membrane, with protons being carried across the membrane as hydrogens on the quinol. In the process called Q cycle, 2 protons are consumed from the matrix, 4 protons are released into the intermembrane space and 2 electrons are passed to cytochrome c. This is Cytochrome b-c1 complex subunit 7-1, mitochondrial (QCR7-1) from Arabidopsis thaliana (Mouse-ear cress).